An 89-amino-acid polypeptide reads, in one-letter code: MGEVAATMKIMPEGVDTDLDDLKIRLEAVLPEGASIFGSEIEPVAFGLKALKLVVLVGDLEGGTEPVEEAFAAVPGVESVQVTELGRPV.

The protein belongs to the EF-1-beta/EF-1-delta family.

Functionally, promotes the exchange of GDP for GTP in EF-1-alpha/GDP, thus allowing the regeneration of EF-1-alpha/GTP that could then be used to form the ternary complex EF-1-alpha/GTP/AAtRNA. The sequence is that of Elongation factor 1-beta from Methanococcoides burtonii (strain DSM 6242 / NBRC 107633 / OCM 468 / ACE-M).